The following is a 473-amino-acid chain: Gamma-aminobutyric acid receptor subunit beta-3 (473 aa).

Positions 1–25 (MWGFAGGRLFGIFSAPVLVAVVCCA) are cleaved as a signal peptide. The Extracellular portion of the chain corresponds to 26–246 (QSVNDPGNMS…FRLKRNIGYF (221 aa)). Asparagine 33 and asparagine 105 each carry an N-linked (GlcNAc...) asparagine glycan. Tyrosine 122 contributes to the histamine binding site. A disulfide bridge links cysteine 161 with cysteine 175. N-linked (GlcNAc...) asparagine glycosylation occurs at asparagine 174. 4-aminobutanoate-binding residues include glutamate 180, tyrosine 182, and threonine 227. Residues 181 to 182 (SY) and threonine 227 each bind histamine. Residues 247-267 (ILQTYMPSILITILSWVSFWI) traverse the membrane as a helical segment. The Cytoplasmic segment spans residues 268 to 271 (NYDA). The chain crosses the membrane as a helical span at residues 272–292 (SAARVALGITTVLTMTTINTH). Residues 293-304 (LRETLPKIPYVK) lie on the Extracellular side of the membrane. The helical transmembrane segment at 305-328 (AIDMYLMGCFVFVFLALLEYAFVN) threads the bilayer. Over 329–447 (YIFFGRGPQR…KIPDLTDVNA (119 aa)) the chain is Cytoplasmic. The helical transmembrane segment at 448–470 (IDRWSRIVFPFTFSLFNLVYWLY) threads the bilayer. The Extracellular segment spans residues 471–473 (YVN).

The protein belongs to the ligand-gated ion channel (TC 1.A.9) family. Gamma-aminobutyric acid receptor (TC 1.A.9.5) subfamily. GABRB3 sub-subfamily. Heteropentamer, formed by a combination of alpha (GABRA1-6), beta (GABRB1-3), gamma (GABRG1-3), delta (GABRD), epsilon (GABRE), rho (GABRR1-3), pi (GABRP) and theta (GABRQ) chains, each subunit exhibiting distinct physiological and pharmacological properties. Can form functional homopentamers (in vitro). Interacts with UBQLN1. May interact with KIF21B. Identified in a complex of 720 kDa composed of LHFPL4, NLGN2, GABRA1, GABRB2, GABRG2 and GABRB3. Interacts with LHFPL4. Interacts with GIT1; this interaction is required for synaptic GABRB3 surface stability and inhibitory synapse strength.

It localises to the postsynaptic cell membrane. The protein localises to the cell membrane. Its subcellular location is the cytoplasmic vesicle membrane. It carries out the reaction chloride(in) = chloride(out). Potentiated by histamine. In terms of biological role, beta subunit of the heteropentameric ligand-gated chloride channel gated by gamma-aminobutyric acid (GABA), a major inhibitory neurotransmitter in the brain. GABA-gated chloride channels, also named GABA(A) receptors (GABAAR), consist of five subunits arranged around a central pore and contain GABA active binding site(s) located at the alpha and beta subunit interface(s). GABAARs containing beta-3/GABRB3 subunit are found at both synaptic and extrasynaptic sites. When activated by GABA, GABAARs selectively allow the flow of chloride anions across the cell membrane down their electrochemical gradient. Chloride influx into the postsynaptic neuron following GABAAR opening decreases the neuron ability to generate a new action potential, thereby reducing nerve transmission. GABAARs containing alpha-1 and beta-3 subunits exhibit synaptogenic activity; the gamma-2 subunit being necessary but not sufficient to induce rapid synaptic contacts formation. Extrasynaptic beta-3 receptors contribute to the tonic GABAergic inhibition. GABAARs containing alpha-1, beta-3 and epsilon subunits may permit spontaneous chloride channel activity while preserving the structural information required for GABA-gated openings. Beta-containing GABAARs can simultaneously bind GABA and histamine where histamine binds at the interface of two neighboring beta subunits, which may be involved in the regulation of sleep and wakefulness. Plays an important role in somatosensation and in the production of antinociception. The polypeptide is Gamma-aminobutyric acid receptor subunit beta-3 (Mus musculus (Mouse)).